Consider the following 357-residue polypeptide: Ribosomal RNA large subunit methyltransferase M (357 aa).

S-adenosyl-L-methionine contacts are provided by residues serine 183, 216-219 (APGG), aspartate 235, aspartate 255, and aspartate 271. The active-site Proton acceptor is lysine 300.

It belongs to the class I-like SAM-binding methyltransferase superfamily. RNA methyltransferase RlmE family. RlmM subfamily. Monomer.

The protein localises to the cytoplasm. It carries out the reaction cytidine(2498) in 23S rRNA + S-adenosyl-L-methionine = 2'-O-methylcytidine(2498) in 23S rRNA + S-adenosyl-L-homocysteine + H(+). Functionally, catalyzes the 2'-O-methylation at nucleotide C2498 in 23S rRNA. The polypeptide is Ribosomal RNA large subunit methyltransferase M (Pseudomonas fluorescens (strain Pf0-1)).